A 457-amino-acid chain; its full sequence is tRNA-2-methylthio-N(6)-dimethylallyladenosine synthase (457 aa).

The region spanning 3-120 is the MTTase N-terminal domain; it reads KKVYVKTFGC…LPQMIDARRA (118 aa). The [4Fe-4S] cluster site is built by cysteine 12, cysteine 49, cysteine 83, cysteine 157, cysteine 161, and cysteine 164. In terms of domain architecture, Radical SAM core spans 143–377; that stretch reads RVEGPSAFVS…QATIEENVAR (235 aa). A TRAM domain is found at 380 to 447; the sequence is QSMVGKVERI…PHSLRGELVL (68 aa).

This sequence belongs to the methylthiotransferase family. MiaB subfamily. In terms of assembly, monomer. [4Fe-4S] cluster is required as a cofactor.

It localises to the cytoplasm. It carries out the reaction N(6)-dimethylallyladenosine(37) in tRNA + (sulfur carrier)-SH + AH2 + 2 S-adenosyl-L-methionine = 2-methylsulfanyl-N(6)-dimethylallyladenosine(37) in tRNA + (sulfur carrier)-H + 5'-deoxyadenosine + L-methionine + A + S-adenosyl-L-homocysteine + 2 H(+). Functionally, catalyzes the methylthiolation of N6-(dimethylallyl)adenosine (i(6)A), leading to the formation of 2-methylthio-N6-(dimethylallyl)adenosine (ms(2)i(6)A) at position 37 in tRNAs that read codons beginning with uridine. This is tRNA-2-methylthio-N(6)-dimethylallyladenosine synthase from Burkholderia cenocepacia (strain HI2424).